We begin with the raw amino-acid sequence, 100 residues long: NADH-quinone oxidoreductase subunit K (100 aa).

Transmembrane regions (helical) follow at residues 2 to 22 (IGLT…LVGI), 29 to 49 (IMLF…LAAI), and 60 to 80 (IIAF…LGLL).

The protein belongs to the complex I subunit 4L family. As to quaternary structure, NDH-1 is composed of 14 different subunits. Subunits NuoA, H, J, K, L, M, N constitute the membrane sector of the complex.

Its subcellular location is the cell inner membrane. It catalyses the reaction a quinone + NADH + 5 H(+)(in) = a quinol + NAD(+) + 4 H(+)(out). In terms of biological role, NDH-1 shuttles electrons from NADH, via FMN and iron-sulfur (Fe-S) centers, to quinones in the respiratory chain. The immediate electron acceptor for the enzyme in this species is believed to be ubiquinone. Couples the redox reaction to proton translocation (for every two electrons transferred, four hydrogen ions are translocated across the cytoplasmic membrane), and thus conserves the redox energy in a proton gradient. In Campylobacter concisus (strain 13826), this protein is NADH-quinone oxidoreductase subunit K.